The sequence spans 350 residues: Ferrochelatase (350 aa).

Positions 220 and 301 each coordinate Fe cation.

It belongs to the ferrochelatase family.

Its subcellular location is the cytoplasm. It carries out the reaction heme b + 2 H(+) = protoporphyrin IX + Fe(2+). It functions in the pathway porphyrin-containing compound metabolism; protoheme biosynthesis; protoheme from protoporphyrin-IX: step 1/1. Catalyzes the ferrous insertion into protoporphyrin IX. The chain is Ferrochelatase from Brucella anthropi (strain ATCC 49188 / DSM 6882 / CCUG 24695 / JCM 21032 / LMG 3331 / NBRC 15819 / NCTC 12168 / Alc 37) (Ochrobactrum anthropi).